The primary structure comprises 158 residues: Transcriptional regulator MraZ (158 aa).

SpoVT-AbrB domains lie at 7-66 and 95-138; these read KEQH…EPSV and LDCV…APEK.

Belongs to the MraZ family. In terms of assembly, forms oligomers.

The protein resides in the cytoplasm. Its subcellular location is the nucleoid. The protein is Transcriptional regulator MraZ of Prosthecochloris aestuarii (strain DSM 271 / SK 413).